Consider the following 413-residue polypeptide: Multifunctional CCA protein (413 aa).

Residues G8 and R11 each contribute to the ATP site. Positions 8 and 11 each coordinate CTP. The Mg(2+) site is built by D21 and D23. ATP is bound by residues R91, R143, and R146. CTP is bound by residues R91, R143, and R146. Residues T232–L333 enclose the HD domain.

This sequence belongs to the tRNA nucleotidyltransferase/poly(A) polymerase family. Bacterial CCA-adding enzyme type 1 subfamily. As to quaternary structure, monomer. Can also form homodimers and oligomers. Mg(2+) is required as a cofactor. It depends on Ni(2+) as a cofactor.

The catalysed reaction is a tRNA precursor + 2 CTP + ATP = a tRNA with a 3' CCA end + 3 diphosphate. It carries out the reaction a tRNA with a 3' CCA end + 2 CTP + ATP = a tRNA with a 3' CCACCA end + 3 diphosphate. Its function is as follows. Catalyzes the addition and repair of the essential 3'-terminal CCA sequence in tRNAs without using a nucleic acid template. Adds these three nucleotides in the order of C, C, and A to the tRNA nucleotide-73, using CTP and ATP as substrates and producing inorganic pyrophosphate. tRNA 3'-terminal CCA addition is required both for tRNA processing and repair. Also involved in tRNA surveillance by mediating tandem CCA addition to generate a CCACCA at the 3' terminus of unstable tRNAs. While stable tRNAs receive only 3'-terminal CCA, unstable tRNAs are marked with CCACCA and rapidly degraded. This chain is Multifunctional CCA protein, found in Burkholderia ambifaria (strain ATCC BAA-244 / DSM 16087 / CCUG 44356 / LMG 19182 / AMMD) (Burkholderia cepacia (strain AMMD)).